Consider the following 577-residue polypeptide: Proline--tRNA ligase (577 aa).

Belongs to the class-II aminoacyl-tRNA synthetase family. ProS type 1 subfamily. Homodimer.

It localises to the cytoplasm. It catalyses the reaction tRNA(Pro) + L-proline + ATP = L-prolyl-tRNA(Pro) + AMP + diphosphate. Catalyzes the attachment of proline to tRNA(Pro) in a two-step reaction: proline is first activated by ATP to form Pro-AMP and then transferred to the acceptor end of tRNA(Pro). As ProRS can inadvertently accommodate and process non-cognate amino acids such as alanine and cysteine, to avoid such errors it has two additional distinct editing activities against alanine. One activity is designated as 'pretransfer' editing and involves the tRNA(Pro)-independent hydrolysis of activated Ala-AMP. The other activity is designated 'posttransfer' editing and involves deacylation of mischarged Ala-tRNA(Pro). The misacylated Cys-tRNA(Pro) is not edited by ProRS. The protein is Proline--tRNA ligase of Chlamydia felis (strain Fe/C-56) (Chlamydophila felis).